Consider the following 129-residue polypeptide: Protein Turandot A (129 aa).

The first 21 residues, 1–21 (MNSLTGFMCCALLLISPLCMG), serve as a signal peptide directing secretion. N-linked (GlcNAc...) asparagine glycosylation occurs at Asn-49.

Belongs to the Turandot family.

It localises to the secreted. Its function is as follows. A humoral factor that plays a role in stress tolerance; gives increased resistance to the lethal effects of bacterial challenge and stress. Regulated by the JAK/STAT pathway and NF-KB-like Relish pathway in the fat body, upd3 in the hemocytes and Mekk1 in response to septic injury and consequent immune response. The polypeptide is Protein Turandot A (TotA) (Drosophila yakuba (Fruit fly)).